The sequence spans 222 residues: Probable GTP-binding protein EngB (222 aa).

Residues 23–217 (NASEIVFLGR…REEIVKYTLG (195 aa)) form the EngB-type G domain. Residues 31–38 (GRSNVGKS), 57–61 (GKTQL), 82–85 (DLPG), 152–155 (TKAD), and 191–193 (FSA) each bind GTP. Residues Ser38 and Thr59 each coordinate Mg(2+).

The protein belongs to the TRAFAC class TrmE-Era-EngA-EngB-Septin-like GTPase superfamily. EngB GTPase family. Requires Mg(2+) as cofactor.

Its function is as follows. Necessary for normal cell division and for the maintenance of normal septation. The chain is Probable GTP-binding protein EngB from Helicobacter hepaticus (strain ATCC 51449 / 3B1).